The following is a 418-amino-acid chain: Secreted aspartic protease 5 (418 aa).

The first 18 residues, 1–18 (MFLKNILSVLAFALLIDA), serve as a signal peptide directing secretion. The propeptide at 19–76 (APVKRSPGFVTLDFNVKRSLVDPDDPTVEAKRSPLFLEFTPSEFPVDETGRDGDVDKR) is activation peptide. Residues 90 to 404 (YTADITVGSD…NLDDKKISMA (315 aa)) form the Peptidase A1 domain. The active site involves D108. 108 to 110 (DTG) is a binding site for pepstatin A. A disulfide bond links C123 and C135. A pepstatin A-binding site is contributed by 161–162 (GD). E268 contacts Zn(2+). D294 is an active-site residue. Pepstatin A is bound at residue 294-298 (DSGTT). A disulfide bridge connects residues C332 and C370.

It belongs to the peptidase A1 family.

It is found in the secreted. The enzyme catalyses Preferential cleavage at the carboxyl of hydrophobic amino acids, but fails to cleave 15-Leu-|-Tyr-16, 16-Tyr-|-Leu-17 and 24-Phe-|-Phe-25 of insulin B chain. Activates trypsinogen, and degrades keratin.. Its activity is regulated as follows. Inhibited by pepstatin A analogs. Secreted aspartic peptidases (SAPs) are a group of ten acidic hydrolases considered as key virulence factors. These enzymes supply the fungus with nutrient amino acids as well as are able to degrade the selected host's proteins involved in the immune defense. Moreover, acts toward human hemoglobin though limited proteolysis to generate a variety of antimicrobial hemocidins, enabling to compete with the other microorganisms of the same physiological niche using the microbicidal peptides generated from the host protein. In Candida albicans (strain SC5314 / ATCC MYA-2876) (Yeast), this protein is Secreted aspartic protease 5.